The primary structure comprises 316 residues: Phospholipase A1 4 (316 aa).

The N-terminal stretch at 1–4 (ADDL) is a signal peptide. A propeptide spanning residues 5–14 (TTLRNGTLDR) is cleaved from the precursor. C20 and C103 are disulfide-bonded. The active-site Nucleophile is S153. The active-site Charge relay system is the D181. Disulfide bonds link C192–C197 and C235–C240. Residue H242 is the Charge relay system of the active site. 3 cysteine pairs are disulfide-bonded: C257-C284, C258-C309, and C277-C282.

This sequence belongs to the AB hydrolase superfamily. Lipase family. In terms of tissue distribution, expressed by the venom gland.

It is found in the secreted. It catalyses the reaction a 1,2-diacyl-sn-glycero-3-phosphocholine + H2O = a 2-acyl-sn-glycero-3-phosphocholine + a fatty acid + H(+). In terms of biological role, catalyzes the hydrolysis of phosphatidylcholine with phospholipase A1 activity. May act as an allergen and induce hemolytic activity. This chain is Phospholipase A1 4, found in Polistes dominula (European paper wasp).